We begin with the raw amino-acid sequence, 949 residues long: Coiled-coil domain-containing protein 66 (949 aa).

Thr-115 and Thr-121 each carry phosphothreonine. Ser-369 is subject to Phosphoserine. Residues 474 to 558 (QVEEKCRKKQ…EQRIRELAQK (85 aa)) are a coiled coil. The interval 570 to 949 (GVDTIQIEYN…NQEENFGSSF (380 aa)) is mediates localization to cilia, centrosomes and spindle microtubules and the interaction with PCM1, CEP290, CEP104 and CSPP1. Ser-606 is modified (phosphoserine). 2 disordered regions span residues 691 to 714 (QTKH…KRYI) and 789 to 809 (SFSK…RTQQ).

Homodimer; disulfide-linked. Interacts with CEP290. Interacts with PCM1. Interacts with ARMC9, TOGARAM1, CSPP1 and CEP104. Interacts with CDK5RAP2, CEP152, CEP192, TBG1 and PRC1.

The protein localises to the cytoplasm. It localises to the cytoskeleton. The protein resides in the microtubule organizing center. It is found in the centrosome. Its subcellular location is the centriolar satellite. The protein localises to the cell projection. It localises to the cilium. The protein resides in the cilium basal body. It is found in the cilium axoneme. Its subcellular location is the photoreceptor inner segment. The protein localises to the photoreceptor outer segment. Its function is as follows. Microtubule-binding protein required for ciliogenesis. May function in ciliogenesis by mediating the transport of proteins like BBS4 to the cilium, but also through the organization of the centriolar satellites. Required for the assembly of signaling-competent cilia with proper structure and length. Mediates this function in part by regulating transition zone assembly and basal body recruitment of the IFT-B complex. Cooperates with the ciliopathy proteins CSPP1 and CEP104 during cilium length regulation. Plays two important roles during cell division. First, is required for mitotic progression via regulation of spindle assembly, organization and orientation, levels of spindle microtubules (MTs), kinetochore-fiber integrity, and chromosome alignment. Second, functions during cytokinesis in part by regulating assembly and organization of central spindle and midbody MTs Plays a role in retina morphogenesis and/or homeostasis. This Pongo abelii (Sumatran orangutan) protein is Coiled-coil domain-containing protein 66.